Reading from the N-terminus, the 152-residue chain is Probable spermine N(1)-acetyltransferase (152 aa).

The region spanning 3 to 152 is the N-acetyltransferase domain; the sequence is INIKAVTDDN…NGEKVMVKEL (150 aa). Residues 82 to 84, 89 to 95, and 122 to 131 each bind acetyl-CoA; these read FFI, QGKGLGK, and NIHAIRLYQR. The active-site Proton donor is the Y129.

This sequence belongs to the acetyltransferase family.

The enzyme catalyses an alkane-alpha,omega-diamine + acetyl-CoA = an N-acetylalkane-alpha,omega-diamine + CoA + H(+). It catalyses the reaction spermine + acetyl-CoA = N(1)-acetylspermine + CoA + H(+). Its pathway is amine and polyamine degradation; spermine degradation. Functionally, probably acetylates spermine to N(1)-acetylspermine. This chain is Probable spermine N(1)-acetyltransferase, found in Bacillus subtilis subsp. natto (strain BEST195).